Here is a 425-residue protein sequence, read N- to C-terminus: tRNA(Ile)-lysidine synthase (425 aa).

27–32 (SGGLDS) contacts ATP.

This sequence belongs to the tRNA(Ile)-lysidine synthase family.

It localises to the cytoplasm. It catalyses the reaction cytidine(34) in tRNA(Ile2) + L-lysine + ATP = lysidine(34) in tRNA(Ile2) + AMP + diphosphate + H(+). Ligates lysine onto the cytidine present at position 34 of the AUA codon-specific tRNA(Ile) that contains the anticodon CAU, in an ATP-dependent manner. Cytidine is converted to lysidine, thus changing the amino acid specificity of the tRNA from methionine to isoleucine. This Streptococcus pneumoniae (strain Hungary19A-6) protein is tRNA(Ile)-lysidine synthase.